The sequence spans 161 residues: Allophycocyanin beta chain (161 aa).

The residue at position 71 (Asn-71) is an N4-methylasparagine. Cys-81 is a (2R,3E)-phycocyanobilin binding site.

The protein belongs to the phycobiliprotein family. In terms of assembly, heterodimer of an alpha and a beta chain. Post-translationally, contains one covalently linked phycocyanobilin chromophore.

The protein localises to the cellular thylakoid membrane. In terms of biological role, light-harvesting photosynthetic bile pigment-protein from the phycobiliprotein complex. Allophycocyanin has a maximum absorption at approximately 650 nanometers. The chain is Allophycocyanin beta chain (apcB) from Synechocystis sp. (strain PCC 6714) (Aphanocapsa sp. (strain PCC 6714)).